Reading from the N-terminus, the 538-residue chain is Coiled-coil domain-containing protein 8 (538 aa).

Positions 58 to 128 are disordered; that stretch reads IMEKSTPHPP…QGPRRGKKVR (71 aa). The segment covering 119–128 has biased composition (basic residues); it reads QGPRRGKKVR. A phosphoserine mark is found at Ser-142, Ser-146, and Ser-261. A disordered region spans residues 213 to 473; it reads WAPRAGPGVG…GTAPGARARK (261 aa). A compositionally biased stretch (basic and acidic residues) spans 301-313; sequence DSQREEAIADQRE. Over residues 321–332 the composition is skewed to low complexity; it reads AGAPADQGAEAA. The stretch at 349–366 forms a coiled coil; it reads AEEGAEAADNQREEAADN. 3 stretches are compositionally biased toward basic and acidic residues: residues 357-373, 381-392, and 405-419; these read DNQR…EAPA, DNHREEAADNQR, and DNQR…RERA. Low complexity-rich tracts occupy residues 428 to 438 and 458 to 469; these read QRAQARAGQRA and AAQGTTGTAPGA. Residues 500–506 carry the PxLPxI/L motif; mediates interaction with ANKRA2 motif; the sequence is PRLPTLP. Positions 514–535 form a coiled coil; sequence EARNLRVLRAEARAEAEQGEQE.

Component of the 3M complex, composed of core components CUL7, CCDC8 and OBSL1. Interacts (via PxLPxI/L motif) with ANKRA2 (via ankyrin repeats); may link the 3M complex to histone deacetylases including HDAC4 and HDAC5. As to expression, widely expressed with low levels in spleen, skeletal muscle, small intestine, kidney and liver.

The protein resides in the cytoplasm. It is found in the cytoskeleton. The protein localises to the microtubule organizing center. It localises to the centrosome. Its function is as follows. Core component of the 3M complex, a complex required to regulate microtubule dynamics and genome integrity. It is unclear how the 3M complex regulates microtubules, it could act by controlling the level of a microtubule stabilizer. Required for localization of CUL7 to the centrosome. This Homo sapiens (Human) protein is Coiled-coil domain-containing protein 8 (CCDC8).